Consider the following 273-residue polypeptide: Dermonecrotic toxin LarSicTox-alphaIB1b (273 aa).

Residue His-5 is part of the active site. Glu-25 and Asp-27 together coordinate Mg(2+). Catalysis depends on His-41, which acts as the Nucleophile. 2 cysteine pairs are disulfide-bonded: Cys-45-Cys-51 and Cys-47-Cys-190. Position 85 (Asp-85) interacts with Mg(2+). An N-linked (GlcNAc...) asparagine glycan is attached at Asn-250.

This sequence belongs to the arthropod phospholipase D family. Class II subfamily. Mg(2+) serves as cofactor. In terms of tissue distribution, expressed by the venom gland.

The protein resides in the secreted. It catalyses the reaction an N-(acyl)-sphingosylphosphocholine = an N-(acyl)-sphingosyl-1,3-cyclic phosphate + choline. The catalysed reaction is an N-(acyl)-sphingosylphosphoethanolamine = an N-(acyl)-sphingosyl-1,3-cyclic phosphate + ethanolamine. The enzyme catalyses a 1-acyl-sn-glycero-3-phosphocholine = a 1-acyl-sn-glycero-2,3-cyclic phosphate + choline. It carries out the reaction a 1-acyl-sn-glycero-3-phosphoethanolamine = a 1-acyl-sn-glycero-2,3-cyclic phosphate + ethanolamine. In terms of biological role, dermonecrotic toxins cleave the phosphodiester linkage between the phosphate and headgroup of certain phospholipids (sphingolipid and lysolipid substrates), forming an alcohol (often choline) and a cyclic phosphate. This toxin acts on sphingomyelin (SM). It may also act on ceramide phosphoethanolamine (CPE), lysophosphatidylcholine (LPC) and lysophosphatidylethanolamine (LPE), but not on lysophosphatidylserine (LPS), and lysophosphatidylglycerol (LPG). It acts by transphosphatidylation, releasing exclusively cyclic phosphate products as second products. Induces dermonecrosis, hemolysis, increased vascular permeability, edema, inflammatory response, and platelet aggregation. The polypeptide is Dermonecrotic toxin LarSicTox-alphaIB1b (Loxosceles arizonica (Arizona brown spider)).